A 206-amino-acid chain; its full sequence is dITP/XTP pyrophosphatase (206 aa).

A substrate-binding site is contributed by 7–12; the sequence is SCHGYK. The Proton acceptor role is filled by aspartate 70. Position 70 (aspartate 70) interacts with Mg(2+). Substrate-binding positions include threonine 71, 154–157, lysine 177, and 182–183; these read FGYD and HR.

This sequence belongs to the HAM1 NTPase family. In terms of assembly, homodimer. Requires Mg(2+) as cofactor.

The catalysed reaction is XTP + H2O = XMP + diphosphate + H(+). It carries out the reaction dITP + H2O = dIMP + diphosphate + H(+). The enzyme catalyses ITP + H2O = IMP + diphosphate + H(+). Functionally, pyrophosphatase that catalyzes the hydrolysis of nucleoside triphosphates to their monophosphate derivatives, with a high preference for the non-canonical purine nucleotides XTP (xanthosine triphosphate), dITP (deoxyinosine triphosphate) and ITP. Seems to function as a house-cleaning enzyme that removes non-canonical purine nucleotides from the nucleotide pool, thus preventing their incorporation into DNA/RNA and avoiding chromosomal lesions. The chain is dITP/XTP pyrophosphatase from Chlamydia caviae (strain ATCC VR-813 / DSM 19441 / 03DC25 / GPIC) (Chlamydophila caviae).